Here is a 307-residue protein sequence, read N- to C-terminus: MALLTPLFAFLYHLPQVYKWLLKPYYIASLFMSIAFVMIRKMPGVCEHLSTQREDGNSCDFDWREVEILMFLSAIVMMKNRRAITIEQHVGNIILFCKVANVILFFRLDIRLGLLYLTLCIVFLMTCKPPLYMGPEYIKYFSDKTIDEELEKDHRVTWIVEFFANWSPECQSFASVYADLSLKYNCAGLKFGKVDIGRYGEVSKKYRVSTSPLSKQLPSLVLFQGGKEVMRRPQVDKKGRAVSWTFTEENIIREFNLNELYQKSKKLGKTKEKLERPSELVFSTVPEEEEPEAETISAMDTESKKDK.

Residues 1-19 (MALLTPLFAFLYHLPQVYK) form the signal peptide. The Extracellular portion of the chain corresponds to 20–111 (WLLKPYYIAS…VILFFRLDIR (92 aa)). Residues 112 to 132 (LGLLYLTLCIVFLMTCKPPLY) form a helical membrane-spanning segment. The Thioredoxin domain occupies 132-269 (YMGPEYIKYF…LYQKSKKLGK (138 aa)). Topologically, residues 133 to 307 (MGPEYIKYFS…AMDTESKKDK (175 aa)) are cytoplasmic. Residues 268–307 (GKTKEKLERPSELVFSTVPEEEEPEAETISAMDTESKKDK) form a disordered region. A compositionally biased stretch (basic and acidic residues) spans 269-278 (KTKEKLERPS). The short motif at 304-307 (KKDK) is the Di-lysine motif element.

As to quaternary structure, monomer. Homodimer; disulfide-linked. Occurs in both reduced and oxidized monomeric form. Oxidative conditions increase homodimerization.

It localises to the endoplasmic reticulum membrane. The protein resides in the mitochondrion membrane. In terms of biological role, endoplasmic reticulum and mitochondria-associated protein that probably functions as a regulator of cellular redox state and thereby regulates protein post-translational modification, protein folding and mitochondrial activity. The protein is Thioredoxin-related transmembrane protein 2-B (tmx2b) of Danio rerio (Zebrafish).